We begin with the raw amino-acid sequence, 494 residues long: Cobyrinate a,c-diamide synthase (494 aa).

The GATase cobBQ-type domain maps to 270 to 475 (KIGVALDEAF…AHLHGVAYRE (206 aa)). C352 functions as the Nucleophile in the catalytic mechanism.

This sequence belongs to the CobB/CbiA family. Requires Mg(2+) as cofactor.

The enzyme catalyses cob(II)yrinate + 2 L-glutamine + 2 ATP + 2 H2O = cob(II)yrinate a,c diamide + 2 L-glutamate + 2 ADP + 2 phosphate + 2 H(+). It catalyses the reaction Ni-sirohydrochlorin + 2 L-glutamine + 2 ATP + 2 H2O = Ni-sirohydrochlorin a,c-diamide + 2 L-glutamate + 2 ADP + 2 phosphate + 2 H(+). Its pathway is cofactor biosynthesis; adenosylcobalamin biosynthesis; cob(II)yrinate a,c-diamide from sirohydrochlorin (anaerobic route): step 10/10. In terms of biological role, catalyzes the ATP-dependent amidation of the two carboxylate groups at positions a and c of cobyrinate, using either L-glutamine or ammonia as the nitrogen source (Potential). Involved in the biosynthesis of the unique nickel-containing tetrapyrrole coenzyme F430, the prosthetic group of methyl-coenzyme M reductase (MCR), which plays a key role in methanogenesis and anaerobic methane oxidation. Catalyzes the ATP-dependent amidation of the two carboxylate groups at positions a and c of Ni-sirohydrochlorin, using L-glutamine or ammonia as the nitrogen source. Also able to use sirohydrochlorin as substrate, but only produces a monoamide species in a much slower reaction. Unable to use other metallosirohydrochlorins such as sirohaem and Co-sirohydrochlorin. In Methanosarcina barkeri (strain Fusaro / DSM 804), this protein is Cobyrinate a,c-diamide synthase.